A 396-amino-acid chain; its full sequence is Tryptophan synthase beta chain (396 aa).

K86 carries the N6-(pyridoxal phosphate)lysine modification.

Belongs to the TrpB family. Tetramer of two alpha and two beta chains. Requires pyridoxal 5'-phosphate as cofactor.

It carries out the reaction (1S,2R)-1-C-(indol-3-yl)glycerol 3-phosphate + L-serine = D-glyceraldehyde 3-phosphate + L-tryptophan + H2O. It participates in amino-acid biosynthesis; L-tryptophan biosynthesis; L-tryptophan from chorismate: step 5/5. Its function is as follows. The beta subunit is responsible for the synthesis of L-tryptophan from indole and L-serine. The chain is Tryptophan synthase beta chain from Vibrio campbellii (strain ATCC BAA-1116).